Here is a 273-residue protein sequence, read N- to C-terminus: Dermonecrotic toxin LsaSicTox-alphaIB1aiii (273 aa).

Residue His-5 is part of the active site. Positions 25 and 27 each coordinate Mg(2+). Residue His-41 is the Nucleophile of the active site. 2 disulfide bridges follow: Cys-45-Cys-51 and Cys-47-Cys-190. Position 85 (Asp-85) interacts with Mg(2+).

The protein belongs to the arthropod phospholipase D family. Class II subfamily. Requires Mg(2+) as cofactor. Expressed by the venom gland.

It localises to the secreted. It carries out the reaction an N-(acyl)-sphingosylphosphocholine = an N-(acyl)-sphingosyl-1,3-cyclic phosphate + choline. The catalysed reaction is an N-(acyl)-sphingosylphosphoethanolamine = an N-(acyl)-sphingosyl-1,3-cyclic phosphate + ethanolamine. It catalyses the reaction a 1-acyl-sn-glycero-3-phosphocholine = a 1-acyl-sn-glycero-2,3-cyclic phosphate + choline. The enzyme catalyses a 1-acyl-sn-glycero-3-phosphoethanolamine = a 1-acyl-sn-glycero-2,3-cyclic phosphate + ethanolamine. In terms of biological role, dermonecrotic toxins cleave the phosphodiester linkage between the phosphate and headgroup of certain phospholipids (sphingolipid and lysolipid substrates), forming an alcohol (often choline) and a cyclic phosphate. This toxin acts on sphingomyelin (SM). It may also act on ceramide phosphoethanolamine (CPE), lysophosphatidylcholine (LPC) and lysophosphatidylethanolamine (LPE), but not on lysophosphatidylserine (LPS), and lysophosphatidylglycerol (LPG). It acts by transphosphatidylation, releasing exclusively cyclic phosphate products as second products. Induces dermonecrosis, hemolysis, increased vascular permeability, edema, inflammatory response, and platelet aggregation. The sequence is that of Dermonecrotic toxin LsaSicTox-alphaIB1aiii from Loxosceles sabina (Tucson recluse spider).